The sequence spans 144 residues: Gastric inhibitory polypeptide (144 aa).

The first 21 residues, 1-21 (MVALKTCSLLLVLLFLAVGLG), serve as a signal peptide directing secretion. 2 consecutive propeptides follow at residues 22-42 (EKEEVEFRSHAKFAGPRPRGP) and 87-144 (EARA…LRSQ). Positions 94 to 113 (AGQSQGKEDKEAQESSLPKS) are disordered.

The protein belongs to the glucagon family.

It is found in the secreted. Potent stimulator of insulin secretion and relatively poor inhibitor of gastric acid secretion. The chain is Gastric inhibitory polypeptide (Gip) from Mus musculus (Mouse).